Consider the following 449-residue polypeptide: Lipase (449 aa).

The first 23 residues, 1–23 (MGVFDYKNLGTEASKTLFADATA), serve as a signal peptide directing secretion. The segment at 58-77 (RQHRLPGSDPPAFPGILTRK) is disordered. Ser-206 (charge relay system) is an active-site residue. Residues Gly-318, Asp-387, and Asp-396 each contribute to the Ca(2+) site. Hemolysin-type calcium-binding repeat units lie at residues 372 to 389 (IGSDGNDLIQGGKGADFI) and 390 to 407 (EGGKGNDTIRDNSGHNTF).

Belongs to the AB hydrolase superfamily. Lipase family.

It carries out the reaction a triacylglycerol + H2O = a diacylglycerol + a fatty acid + H(+). This is Lipase from Pseudomonas fluorescens.